A 147-amino-acid polypeptide reads, in one-letter code: Sec-independent protein translocase protein TatB (147 aa).

A helical transmembrane segment spans residues 2–22; that stretch reads FDGIGFMELLLIGVLGLVVLG. A compositionally biased stretch (polar residues) spans 85–97; it reads QLKQAAQSVNRPY. The segment at 85–147 is disordered; it reads QLKQAAQSVN…DTRSNPKANG (63 aa). Residues 113-133 are compositionally biased toward low complexity; it reads ASQSVSTEASPSASSAPTSES.

It belongs to the TatB family. The Tat system comprises two distinct complexes: a TatABC complex, containing multiple copies of TatA, TatB and TatC subunits, and a separate TatA complex, containing only TatA subunits. Substrates initially bind to the TatABC complex, which probably triggers association of the separate TatA complex to form the active translocon.

The protein resides in the cell inner membrane. In terms of biological role, part of the twin-arginine translocation (Tat) system that transports large folded proteins containing a characteristic twin-arginine motif in their signal peptide across membranes. Together with TatC, TatB is part of a receptor directly interacting with Tat signal peptides. TatB may form an oligomeric binding site that transiently accommodates folded Tat precursor proteins before their translocation. The polypeptide is Sec-independent protein translocase protein TatB (Shewanella sp. (strain ANA-3)).